The following is a 272-amino-acid chain: MLTYPNIDPVAIHLGPLQVHWYGLMYLLAFLCAWGLASYRAKQRDGWTSDMVSDLVFYGALGVVLGGRIGYVLFYEFDKFLENPIWLFQVWTGGMSFHGGFLGVMIAMLFWCKKYQKTWFQTLDFIAPCVPTGLMFGRIGNFIGGELYGRAVTDPNYPFGMIFPTDPLHLVRHPSQIYQALCEGLLLFIILWWFSSKPRPRMAVSALFLMGYGVARFVMEFFRQPDADQGFILFGWMTKGQILTVPMLLIGLWMMWYAYQKKIYDWGPQKNS.

7 consecutive transmembrane segments (helical) span residues 17–37 (LQVH…WGLA), 55–75 (LVFY…VLFY), 90–110 (VWTG…AMLF), 125–145 (FIAP…FIGG), 174–194 (PSQI…LWWF), 202–222 (MAVS…MEFF), and 230–250 (GFIL…MLLI). Arg-138 is a binding site for a 1,2-diacyl-sn-glycero-3-phospho-(1'-sn-glycerol).

Belongs to the Lgt family.

The protein resides in the cell inner membrane. It carries out the reaction L-cysteinyl-[prolipoprotein] + a 1,2-diacyl-sn-glycero-3-phospho-(1'-sn-glycerol) = an S-1,2-diacyl-sn-glyceryl-L-cysteinyl-[prolipoprotein] + sn-glycerol 1-phosphate + H(+). Its pathway is protein modification; lipoprotein biosynthesis (diacylglyceryl transfer). Its function is as follows. Catalyzes the transfer of the diacylglyceryl group from phosphatidylglycerol to the sulfhydryl group of the N-terminal cysteine of a prolipoprotein, the first step in the formation of mature lipoproteins. This chain is Phosphatidylglycerol--prolipoprotein diacylglyceryl transferase, found in Acinetobacter baumannii (strain ACICU).